The primary structure comprises 59 residues: Potassium channel toxin alpha-KTx 16.4 (59 aa).

The signal sequence occupies residues 1–22 (MKILSIVLIALIICSISICTEA). Intrachain disulfides connect cysteine 30/cysteine 51, cysteine 36/cysteine 56, and cysteine 40/cysteine 58.

This sequence belongs to the short scorpion toxin superfamily. Potassium channel inhibitor family. Alpha-KTx 16 subfamily. As to expression, expressed by the venom gland.

The protein resides in the secreted. In terms of biological role, weak inhibitor of voltage-gated potassium channel hKv1.3/KCNA3. The protein is Potassium channel toxin alpha-KTx 16.4 of Mesobuthus eupeus (Lesser Asian scorpion).